Consider the following 643-residue polypeptide: Replication protein E1 (643 aa).

Positions 28-58 (THGQRQVSSDEDEDETETGEDLDFIDNRVPG) are disordered. The segment covering 36–51 (SDEDEDETETGEDLDF) has biased composition (acidic residues). Residues 84–86 (KRK) carry the Nuclear localization signal motif. 2 positions are modified to phosphoserine; by host: S90 and S103. A Nuclear export signal motif is present at residues 102–111 (LSPRLDAISL). Disordered stretches follow at residues 119–138 (KRRL…TQMV) and 143–181 (EEVT…PQSG). Residues 180–346 (SGTDAAGSVL…QTLVGHSMED (167 aa)) form a DNA-binding region region. Residues 445–595 (VEFVSFLAAF…FPFASPGEPL (151 aa)) enclose the SF3 helicase domain. Residue 471-478 (GPADTGKS) coordinates ATP. K552 participates in a covalent cross-link: Glycyl lysine isopeptide (Lys-Gly) (interchain with G-Cter in SUMO). A disordered region spans residues 617–643 (NSPEEQDDNGNTGEPFRCVPGDVARTV).

Belongs to the papillomaviridae E1 protein family. In terms of assembly, can form hexamers. Interacts with E2 protein; this interaction increases E1 DNA binding specificity. Interacts with host DNA polymerase subunit POLA2. Interacts with host single stranded DNA-binding protein RPA1. Interacts with host TOP1; this interaction stimulates the enzymatic activity of TOP1. In terms of processing, phosphorylated. Sumoylated.

The protein localises to the host nucleus. It carries out the reaction Couples ATP hydrolysis with the unwinding of duplex DNA by translocating in the 3'-5' direction.. It catalyses the reaction ATP + H2O = ADP + phosphate + H(+). ATP-dependent DNA 3'-5' helicase required for initiation of viral DNA replication. It forms a complex with the viral E2 protein. The E1-E2 complex binds to the replication origin which contains binding sites for both proteins. During the initial step, a dimer of E1 interacts with a dimer of protein E2 leading to a complex that binds the viral origin of replication with high specificity. Then, a second dimer of E1 displaces the E2 dimer in an ATP-dependent manner to form the E1 tetramer. Following this, two E1 monomers are added to each half of the site, which results in the formation of two E1 trimers on the viral ori. Subsequently, two hexamers will be created. The double hexamer acts as a bi-directional helicase machinery and unwinds the viral DNA and then recruits the host DNA polymerase to start replication. The chain is Replication protein E1 from Human papillomavirus type 2a.